We begin with the raw amino-acid sequence, 403 residues long: Glyceraldehyde-3-phosphate dehydrogenase A, chloroplastic (403 aa).

A chloroplast-targeting transit peptide spans 1-66 (MASSMLSATT…GGPRRAPTEA (66 aa)). NADP(+) is bound by residues 77–78 (RI), aspartate 102, and arginine 147. Residues 219 to 221 (SCT), threonine 250, arginine 265, 278 to 279 (TG), and arginine 301 contribute to the D-glyceraldehyde 3-phosphate site. Cysteine 220 acts as the Nucleophile in catalysis. Residue asparagine 383 participates in NADP(+) binding.

Belongs to the glyceraldehyde-3-phosphate dehydrogenase family. As to quaternary structure, tetramer of either four A chains (GAPDH 2) or two A and two B chains (GAPDH 1).

It localises to the plastid. The protein resides in the chloroplast. The catalysed reaction is D-glyceraldehyde 3-phosphate + phosphate + NADP(+) = (2R)-3-phospho-glyceroyl phosphate + NADPH + H(+). It participates in carbohydrate biosynthesis; Calvin cycle. The protein is Glyceraldehyde-3-phosphate dehydrogenase A, chloroplastic (GAPA) of Zea mays (Maize).